The following is a 466-amino-acid chain: Cytochrome c-552 (466 aa).

An N-terminal signal peptide occupies residues 1–27 (MVRNLTKKSFALSALVAASLMASGVMA). Residue histidine 87 participates in heme c binding. Heme contacts are provided by cysteine 115, cysteine 118, and lysine 119. Residues cysteine 153, cysteine 156, histidine 157, cysteine 195, cysteine 198, and histidine 199 each coordinate heme c. Glutamate 201, tyrosine 202, lysine 250, and glutamine 252 together coordinate Ca(2+). Tyrosine 202 is a binding site for substrate. Position 253 (histidine 253) interacts with substrate. Residues histidine 264, cysteine 271, cysteine 274, histidine 275, histidine 290, cysteine 303, cysteine 306, histidine 307, and histidine 382 each coordinate heme c.

Belongs to the cytochrome c-552 family. The cofactor is Ca(2+). Heme c is required as a cofactor.

Its subcellular location is the periplasm. The enzyme catalyses 6 Fe(III)-[cytochrome c] + NH4(+) + 2 H2O = 6 Fe(II)-[cytochrome c] + nitrite + 8 H(+). Its pathway is nitrogen metabolism; nitrate reduction (assimilation). Its function is as follows. Catalyzes the reduction of nitrite to ammonia, consuming six electrons in the process. The sequence is that of Cytochrome c-552 from Shewanella sediminis (strain HAW-EB3).